Reading from the N-terminus, the 176-residue chain is Ribosome maturation factor RimM (176 aa).

Residues 93 to 166 (EGEYYHADLI…RVVIELPAEI (74 aa)) form the PRC barrel domain.

It belongs to the RimM family. Binds ribosomal protein uS19.

The protein resides in the cytoplasm. In terms of biological role, an accessory protein needed during the final step in the assembly of 30S ribosomal subunit, possibly for assembly of the head region. Essential for efficient processing of 16S rRNA. May be needed both before and after RbfA during the maturation of 16S rRNA. It has affinity for free ribosomal 30S subunits but not for 70S ribosomes. The protein is Ribosome maturation factor RimM of Rhodopseudomonas palustris (strain BisB18).